Reading from the N-terminus, the 587-residue chain is Membrane protein insertase YidC (587 aa).

5 consecutive transmembrane segments (helical) span residues 5–25 (SVIG…FMKP), 365–385 (GLII…LSLA), 430–450 (LGGC…FYVF), 480–500 (LPLY…TVFF), and 516–536 (IMIW…PSGL).

Belongs to the OXA1/ALB3/YidC family. Type 1 subfamily. As to quaternary structure, interacts with the Sec translocase complex via SecD. Specifically interacts with transmembrane segments of nascent integral membrane proteins during membrane integration.

It localises to the cell inner membrane. Required for the insertion and/or proper folding and/or complex formation of integral membrane proteins into the membrane. Involved in integration of membrane proteins that insert both dependently and independently of the Sec translocase complex, as well as at least some lipoproteins. Aids folding of multispanning membrane proteins. This is Membrane protein insertase YidC from Chlorobaculum parvum (strain DSM 263 / NCIMB 8327) (Chlorobium vibrioforme subsp. thiosulfatophilum).